A 517-amino-acid chain; its full sequence is Glucose-6-phosphate isomerase (517 aa).

Residue glutamate 345 is the Proton donor of the active site. Residues histidine 376 and lysine 490 contribute to the active site.

The protein belongs to the GPI family.

The protein localises to the cytoplasm. The catalysed reaction is alpha-D-glucose 6-phosphate = beta-D-fructose 6-phosphate. The protein operates within carbohydrate biosynthesis; gluconeogenesis. It participates in carbohydrate degradation; glycolysis; D-glyceraldehyde 3-phosphate and glycerone phosphate from D-glucose: step 2/4. Its function is as follows. Catalyzes the reversible isomerization of glucose-6-phosphate to fructose-6-phosphate. The polypeptide is Glucose-6-phosphate isomerase (Erythrobacter litoralis (strain HTCC2594)).